The chain runs to 161 residues: TM2 domain-containing protein DDB_G0278163 (161 aa).

The Cytoplasmic segment spans residues 1-24 (MGHHHHHHGGSGHHHHHHHHGSGH). The chain crosses the membrane as a helical span at residues 25–45 (YGGGAVLVTPIVTPVPVVYGS). Topologically, residues 46–54 (RSSSYCPKS) are extracellular. Positions 52-100 (PKSMTVAYVLWFFFGILGFHRLYLGRVGTFFLYFFTAGVFGLGWLFDAF) constitute a TM2 domain. Residues 55 to 75 (MTVAYVLWFFFGILGFHRLYL) form a helical membrane-spanning segment. Over 76-80 (GRVGT) the chain is Cytoplasmic. Residues 81–101 (FFLYFFTAGVFGLGWLFDAFY) traverse the membrane as a helical segment. Topologically, residues 102-161 (THKMVKHYNECEFTKSCVGQSPPATIPIYQSEGAYPTYQQVPQQPPQFYQPQQQQPQYQP) are extracellular. The segment at 139–161 (YQQVPQQPPQFYQPQQQQPQYQP) is disordered.

The protein belongs to the TM2 family.

The protein localises to the membrane. This Dictyostelium discoideum (Social amoeba) protein is TM2 domain-containing protein DDB_G0278163.